A 214-amino-acid polypeptide reads, in one-letter code: Large ribosomal subunit protein uL16-like (214 aa).

This sequence belongs to the universal ribosomal protein uL16 family. In terms of assembly, component of the 60S large ribosomal subunit (LSU).

Its subcellular location is the cytoplasm. Testis-specific component of the ribosome, which is required for the transition from prophase to metaphase in male meiosis I. Compensates for the inactivated X-linked RPL10 paralog during spermatogenesis. The ribosome is a large ribonucleoprotein complex responsible for the synthesis of proteins in the cell. The small ribosomal subunit (SSU) binds messenger RNAs (mRNAs) and translates the encoded message by selecting cognate aminoacyl-transfer RNA (tRNA) molecules. The large subunit (LSU) contains the ribosomal catalytic site termed the peptidyl transferase center (PTC), which catalyzes the formation of peptide bonds, thereby polymerizing the amino acids delivered by tRNAs into a polypeptide chain. The nascent polypeptides leave the ribosome through a tunnel in the LSU and interact with protein factors that function in enzymatic processing, targeting, and the membrane insertion of nascent chains at the exit of the ribosomal tunnel. This chain is Large ribosomal subunit protein uL16-like (RPL10L), found in Bos taurus (Bovine).